The sequence spans 374 residues: Ribosomal RNA large subunit methyltransferase G (374 aa).

The protein belongs to the methyltransferase superfamily. RlmG family.

The protein resides in the cytoplasm. It catalyses the reaction guanosine(1835) in 23S rRNA + S-adenosyl-L-methionine = N(2)-methylguanosine(1835) in 23S rRNA + S-adenosyl-L-homocysteine + H(+). Specifically methylates the guanine in position 1835 (m2G1835) of 23S rRNA. This chain is Ribosomal RNA large subunit methyltransferase G, found in Pseudomonas entomophila (strain L48).